Reading from the N-terminus, the 1366-residue chain is DNA-directed RNA polymerase subunit beta'' (1366 aa).

Zn(2+) is bound by residues Cys-220, Cys-291, Cys-298, and Cys-301.

The protein belongs to the RNA polymerase beta' chain family. RpoC2 subfamily. In plastids the minimal PEP RNA polymerase catalytic core is composed of four subunits: alpha, beta, beta', and beta''. When a (nuclear-encoded) sigma factor is associated with the core the holoenzyme is formed, which can initiate transcription. The cofactor is Zn(2+).

Its subcellular location is the plastid. It localises to the chloroplast. It catalyses the reaction RNA(n) + a ribonucleoside 5'-triphosphate = RNA(n+1) + diphosphate. DNA-dependent RNA polymerase catalyzes the transcription of DNA into RNA using the four ribonucleoside triphosphates as substrates. The chain is DNA-directed RNA polymerase subunit beta'' from Phaseolus vulgaris (Kidney bean).